A 370-amino-acid polypeptide reads, in one-letter code: Glutamate 5-kinase (370 aa).

K17 serves as a coordination point for ATP. The substrate site is built by S56, D143, and N155. 175-176 is a binding site for ATP; it reads SD. Positions 280-357 constitute a PUA domain; the sequence is RGTIRVDAGA…AEIVAILGYS (78 aa).

The protein belongs to the glutamate 5-kinase family.

Its subcellular location is the cytoplasm. The enzyme catalyses L-glutamate + ATP = L-glutamyl 5-phosphate + ADP. It functions in the pathway amino-acid biosynthesis; L-proline biosynthesis; L-glutamate 5-semialdehyde from L-glutamate: step 1/2. Its function is as follows. Catalyzes the transfer of a phosphate group to glutamate to form L-glutamate 5-phosphate. The protein is Glutamate 5-kinase of Cereibacter sphaeroides (strain ATCC 17023 / DSM 158 / JCM 6121 / CCUG 31486 / LMG 2827 / NBRC 12203 / NCIMB 8253 / ATH 2.4.1.) (Rhodobacter sphaeroides).